The primary structure comprises 128 residues: Ribonuclease P protein component (128 aa).

It belongs to the RnpA family. As to quaternary structure, consists of a catalytic RNA component (M1 or rnpB) and a protein subunit.

The catalysed reaction is Endonucleolytic cleavage of RNA, removing 5'-extranucleotides from tRNA precursor.. In terms of biological role, RNaseP catalyzes the removal of the 5'-leader sequence from pre-tRNA to produce the mature 5'-terminus. It can also cleave other RNA substrates such as 4.5S RNA. The protein component plays an auxiliary but essential role in vivo by binding to the 5'-leader sequence and broadening the substrate specificity of the ribozyme. The sequence is that of Ribonuclease P protein component from Chromohalobacter salexigens (strain ATCC BAA-138 / DSM 3043 / CIP 106854 / NCIMB 13768 / 1H11).